The primary structure comprises 299 residues: Protoheme IX farnesyltransferase (299 aa).

Helical transmembrane passes span isoleucine 25–alanine 45, leucine 51–isoleucine 71, alanine 97–asparagine 117, leucine 119–leucine 139, isoleucine 147–glycine 167, alanine 173–leucine 193, phenylalanine 225–leucine 245, and phenylalanine 275–leucine 295.

Belongs to the UbiA prenyltransferase family. Protoheme IX farnesyltransferase subfamily.

It is found in the cell inner membrane. The catalysed reaction is heme b + (2E,6E)-farnesyl diphosphate + H2O = Fe(II)-heme o + diphosphate. It participates in porphyrin-containing compound metabolism; heme O biosynthesis; heme O from protoheme: step 1/1. Functionally, converts heme B (protoheme IX) to heme O by substitution of the vinyl group on carbon 2 of heme B porphyrin ring with a hydroxyethyl farnesyl side group. The chain is Protoheme IX farnesyltransferase from Nitrosococcus oceani (strain ATCC 19707 / BCRC 17464 / JCM 30415 / NCIMB 11848 / C-107).